The sequence spans 366 residues: 3-beta-hydroxysteroid dehydrogenase (366 aa).

Tyr154 functions as the Proton donor in the catalytic mechanism.

The protein belongs to the 3-beta-HSD family.

It catalyses the reaction testosterone + NAD(+) = androst-4-ene-3,17-dione + NADH + H(+). The enzyme catalyses testosterone + NADP(+) = androst-4-ene-3,17-dione + NADPH + H(+). Functionally, catalyzes the degradation of testosterone into androstenedione. In Mycolicibacterium neoaurum (Mycobacterium neoaurum), this protein is 3-beta-hydroxysteroid dehydrogenase.